Here is a 748-residue protein sequence, read N- to C-terminus: Transducin-like enhancer protein 4 (748 aa).

2 disordered regions span residues 1–20 and 157–332; these read MIRDLSKMYRRRAHPAPHQP and LPIK…DPLA. The interval 1-112 is q domain; that stretch reads MIRDLSKMYR…SQEQQQLQAQ (112 aa). The tract at residues 113 to 179 is GP domain; the sequence is HLLTWTWSAC…HQRDRDSIKS (67 aa). Residues 158–177 show a composition bias toward basic and acidic residues; the sequence is PIKDEKKHHDNDHQRDRDSI. Residues 178–189 are compositionally biased toward low complexity; it reads KSSSVSPSASFR. Residues 180–249 form a ccN domain region; sequence SSVSPSASFR…SPRGSPAHSP (70 aa). Serine 183, serine 187, serine 191, and serine 197 each carry phosphoserine. The span at 190 to 227 shows a compositional bias: basic and acidic residues; it reads GSEKHRNSTDYSSESKKQKTEEKEIAARYDSDGEKSDD. The residue at position 212 (lysine 212) is an N6-acetyllysine. Serine 220 bears the Phosphoserine mark. The residue at position 225 (serine 225) is a Phosphoserine; by CK2. Serine 240 is modified (phosphoserine; by CDK1). 2 positions are modified to phosphoserine: serine 244 and serine 248. Over residues 248-264 the composition is skewed to basic and acidic residues; that stretch reads SPRENGLDKTRLLKKDA. An SP domain region spans residues 250-427; sequence RENGLDKTRL…PGGKPAYSFH (178 aa). The residue at position 256 (lysine 256) is an N6-acetyllysine. A compositionally biased stretch (low complexity) spans 265–280; sequence PISPASVASSSSTPSS. Serine 267 carries the phosphoserine modification. The span at 292–303 shows a compositional bias: polar residues; it reads TTPVSKSNTPTP. At threonine 293 the chain carries Phosphothreonine. Serine 296 and serine 298 each carry phosphoserine. 4 positions are modified to phosphothreonine: threonine 300, threonine 302, threonine 309, and threonine 315. Serine 394 is subject to Phosphoserine. 7 WD repeats span residues 460–498, 506–545, 550–589, 592–631, 633–672, 674–713, and 715–748; these read NHGEVVCAVTISNPTRHVYTGGKGCVKVWDITDPGNKSP, NRDNYIRSCRLLPDGRTLIVGGEASTLSIWDLAAPTPRIK, SSAPACYALAISPDSKVCFSCCSDGNIAVWDLHNQTLVRQ, GHTDGASCIDISNDGTKLWTGGLDNTVRSWDLREGRQLQQ, DFTSQIFSLGYCPTGEWLAVGMENSNVEVLHVTKPDKYQL, LHESCVLSLKFAHCGKWFVRPGKDNLLNAWRTPYGASIFQ, and KESSSVLSCDISADDKYIVTGSGDKKATVYEVIY.

The protein belongs to the WD repeat Groucho/TLE family. In terms of assembly, homooligomer and heterooligomer with other family members. Binds PAX5, LEF1, TCF7, TCF7L1 and TCF7L2. Interacts with ZNF703; TLE4 may mediate ZNF703 transcriptional repression. Interacts with SIX3 and SIX6. Interacts with PAX2. Post-translationally, phosphorylated. PAX5 binding increases phosphorylation. Ubiquitinated by XIAP/BIRC4.

The protein resides in the nucleus. Its function is as follows. Transcriptional corepressor that binds to a number of transcription factors. Inhibits the transcriptional activation mediated by PAX5, and by CTNNB1 and TCF family members in Wnt signaling. The effects of full-length TLE family members may be modulated by association with dominant-negative AES. Essential for the transcriptional repressor activity of SIX3 during retina and lens development and for SIX3 transcriptional auto-repression. Involved in transcriptional repression of GNRHR and enhances MSX1-mediated transcriptional repression of CGA/alpha-GSU. The chain is Transducin-like enhancer protein 4 (Tle4) from Rattus norvegicus (Rat).